Consider the following 203-residue polypeptide: Urease accessory protein UreG (203 aa).

11–18 (GPVGSGKT) lines the GTP pocket.

It belongs to the SIMIBI class G3E GTPase family. UreG subfamily. In terms of assembly, homodimer. UreD, UreF and UreG form a complex that acts as a GTP-hydrolysis-dependent molecular chaperone, activating the urease apoprotein by helping to assemble the nickel containing metallocenter of UreC. The UreE protein probably delivers the nickel.

It is found in the cytoplasm. Its function is as follows. Facilitates the functional incorporation of the urease nickel metallocenter. This process requires GTP hydrolysis, probably effectuated by UreG. The sequence is that of Urease accessory protein UreG from Prochlorococcus marinus (strain MIT 9215).